Consider the following 164-residue polypeptide: CASP-like protein 1C2 (164 aa).

Over 1–8 (MAVELKKV) the chain is Cytoplasmic. Residues 9–29 (FSTILRFLALAATVVAVIVMI) form a helical membrane-spanning segment. At 30–53 (RSHDSAIVLNLTFSAKYNNTPAFK) the chain is on the extracellular side. N39 carries N-linked (GlcNAc...) asparagine glycosylation. A helical transmembrane segment spans residues 54–74 (YFVIAEGIASVYTIIVIFLWS). Over 75–80 (KGLLGR) the chain is Cytoplasmic. Residues 81-101 (LIVILDMVTTVLLTSSISAAL) traverse the membrane as a helical segment. Residues 102 to 129 (AIAQVGKKGNSHAGWLPVCGQVPKFCDQ) lie on the Extracellular side of the membrane. A helical transmembrane segment spans residues 130-150 (AIIALVAGFVAAIVYFMLLLC). Residues 151–164 (SLHAVLTPIFAVKP) are Cytoplasmic-facing.

It belongs to the Casparian strip membrane proteins (CASP) family. In terms of assembly, homodimer and heterodimers.

It is found in the cell membrane. The sequence is that of CASP-like protein 1C2 from Ricinus communis (Castor bean).